The chain runs to 946 residues: DNA primase (946 aa).

A disordered region spans residues R596–T626. Residues F617–T626 are compositionally biased toward polar residues. The CHC2-type zinc finger occupies C881–C920.

This sequence belongs to the herpesviridae DNA primase family. Associates with the helicase and the primase-associated factor to form the helicase-primase factor. Interacts with host SNAPIN.

It is found in the host nucleus. Essential component of the helicase/primase complex. Unwinds the DNA at the replication forks and generates single-stranded DNA for both leading and lagging strand synthesis. The primase initiates primer synthesis and thereby produces large amount of short RNA primers on the lagging strand that the polymerase elongates using dNTPs. The sequence is that of DNA primase (UL70) from Homo sapiens (Human).